Here is a 59-residue protein sequence, read N- to C-terminus: Membrane-associated ATPase epsilon chain (59 aa).

This sequence to E.hirae NtpH. As to quaternary structure, sul-ATPase is composed of six (or maybe five) subunits: alpha, beta, delta, gamma, C (proteolipid), and possibly epsilon.

The catalysed reaction is ATP + H2O + 4 H(+)(in) = ADP + phosphate + 5 H(+)(out). The polypeptide is Membrane-associated ATPase epsilon chain (atpE) (Sulfurisphaera tokodaii (strain DSM 16993 / JCM 10545 / NBRC 100140 / 7) (Sulfolobus tokodaii)).